The primary structure comprises 163 residues: Nucleotide-binding protein all4662 (163 aa).

It belongs to the YajQ family.

Its function is as follows. Nucleotide-binding protein. The sequence is that of Nucleotide-binding protein all4662 from Nostoc sp. (strain PCC 7120 / SAG 25.82 / UTEX 2576).